A 680-amino-acid chain; its full sequence is WD repeat-containing protein 48 homolog (680 aa).

8 WD repeats span residues 26 to 65 (QHRN…SEKY), 71 to 110 (HHND…CMST), 113 to 152 (THRD…ALTA), 164 to 203 (GSKD…RSMK), 206 to 245 (GHTE…CVQT), 248 to 287 (VHKE…NKTL), 290 to 329 (EEQA…RCTM), and 350 to 389 (KGGA…KKEQ). The tract at residues 592 to 616 (ETTPSGGNANNSLQNSQSDANSEGS) is disordered.

The protein belongs to the WD repeat WDR48 family. Catalytic component of the Usp12-46 deubiquitylase complex consisting of Usp12-46, Wdr20 and Uaf1; regulatory subunit that, together wtih Wdr20, stabilizes Usp12-46. The Usp12-46 deubiquitylase complex associates with arr/arrow; the interaction leads to deubiquitination and stabilization of arr/arrow.

In terms of biological role, regulatory component of the Usp12-46 deubiquitylase complex. activates deubiquitination by increasing the catalytic turnover without increasing the affinity of deubiquitinating enzymes for the substrate. The complex deubiquitylates the wg/wingless-signaling receptor arr/arrow, which stabilizes the receptor and increases its concentration at the cell surface; this enhances the sensitivity of cells to wg/wingless-signal stimulation. This increases the amplitude and spatial range of the signaling response to the wg/wingless morphogen gradient, facilitating the precise concentration-dependent regulation of its target genes. Together with Wdr20 and Usp12-46 required for wg/wingless-mediated signaling in the wing imaginal disc and for wg/wingless-dependent regulation of intestinal stem cell proliferation. The protein is WD repeat-containing protein 48 homolog of Drosophila erecta (Fruit fly).